Reading from the N-terminus, the 168-residue chain is Peptide deformylase 1 (168 aa).

Fe cation is bound by residues Cys91 and His133. Glu134 is a catalytic residue. His137 lines the Fe cation pocket.

Belongs to the polypeptide deformylase family. The cofactor is Fe(2+).

The catalysed reaction is N-terminal N-formyl-L-methionyl-[peptide] + H2O = N-terminal L-methionyl-[peptide] + formate. Removes the formyl group from the N-terminal Met of newly synthesized proteins. Requires at least a dipeptide for an efficient rate of reaction. N-terminal L-methionine is a prerequisite for activity but the enzyme has broad specificity at other positions. The sequence is that of Peptide deformylase 1 from Shewanella oneidensis (strain ATCC 700550 / JCM 31522 / CIP 106686 / LMG 19005 / NCIMB 14063 / MR-1).